Reading from the N-terminus, the 223-residue chain is Neurotrophic factor BDNF precursor form (223 aa).

An N-terminal signal peptide occupies residues 1–5 (SCMKA). Positions 6-114 (APMKEVSIRG…AANMSMRVRR (109 aa)) are excised as a propeptide. Asn-107 is a glycosylation site (N-linked (GlcNAc...) asparagine). 2 disulfides stabilise this stretch: Cys-127–Cys-194 and Cys-172–Cys-223.

The protein belongs to the NGF-beta family.

The protein localises to the secreted. Its function is as follows. Promotes the survival of neuronal populations that are all located either in the central nervous system or directly connected to it. This Eryx colubrinus colubrinus protein is Neurotrophic factor BDNF precursor form (BDNF).